Reading from the N-terminus, the 311-residue chain is Uridine phosphorylase 1 (311 aa).

Phosphate contacts are provided by residues G61, R95, and 139-142 (RIGT). Residues 143-144 (SG) and 218-220 (QGR) contribute to the uridine site.

This sequence belongs to the PNP/UDP phosphorylase family. In terms of assembly, homodimer. In terms of processing, the N-terminus is blocked.

The catalysed reaction is uridine + phosphate = alpha-D-ribose 1-phosphate + uracil. It carries out the reaction 2'-deoxyuridine + phosphate = 2-deoxy-alpha-D-ribose 1-phosphate + uracil. It participates in pyrimidine metabolism; UMP biosynthesis via salvage pathway; uracil from uridine (phosphorylase route): step 1/1. With respect to regulation, strongly inhibited by 2,2'-anhydro-5-ethyluridine, a competitive inhibitor. Functionally, catalyzes the reversible phosphorylytic cleavage of uridine to uracil and ribose-1-phosphate which can then be utilized as carbon and energy sources or in the rescue of pyrimidine bases for nucleotide synthesis. Shows broad substrate specificity and can also accept deoxyuridine and other analogous compounds. This chain is Uridine phosphorylase 1, found in Mus musculus (Mouse).